Reading from the N-terminus, the 158-residue chain is Fucolectin (158 aa).

The tract at residues Lys16–Val148 is F5/8 type C-like. The Ca(2+) site is built by Asn35, Asp38, Asn40, and Ser49. 3 disulfide bridges follow: Cys50/Cys146, Cys82/Cys83, and Cys108/Cys124. His52 and Arg79 together coordinate alpha-L-fucose. The short motif at Arg79–Asp81 is the Cell attachment site element. Arg86 lines the alpha-L-fucose pocket. Positions 146 and 147 each coordinate Ca(2+).

It belongs to the fucolectin family. Homotrimer.

Its subcellular location is the secreted. Acts as a defensive agent. Recognizes blood group fucosylated oligosaccharides including A, B, H and Lewis B-type antigens. Does not recognize Lewis A antigen and has low affinity for monovalent haptens. The protein is Fucolectin of Anguilla anguilla (European freshwater eel).